A 274-amino-acid chain; its full sequence is Large ribosomal subunit protein uL2 (274 aa).

Positions 224-274 (VAMNPVDHPHGGGEGRTSGGRHPVTPWGIPTKGYKTRKNKRSNKLIVQKRK) are disordered. Over residues 257–274 (YKTRKNKRSNKLIVQKRK) the composition is skewed to basic residues.

This sequence belongs to the universal ribosomal protein uL2 family. Part of the 50S ribosomal subunit. Forms a bridge to the 30S subunit in the 70S ribosome.

Functionally, one of the primary rRNA binding proteins. Required for association of the 30S and 50S subunits to form the 70S ribosome, for tRNA binding and peptide bond formation. It has been suggested to have peptidyltransferase activity; this is somewhat controversial. Makes several contacts with the 16S rRNA in the 70S ribosome. This chain is Large ribosomal subunit protein uL2, found in Francisella philomiragia subsp. philomiragia (strain ATCC 25017 / CCUG 19701 / FSC 153 / O#319-036).